A 386-amino-acid polypeptide reads, in one-letter code: Galactokinase (386 aa).

A substrate-binding site is contributed by 35–38; the sequence is EHTD. ATP contacts are provided by residues S69 and 125–131; that span reads GAGLSSS. Mg(2+) contacts are provided by S131 and E163. The active-site Proton acceptor is D175. Y224 serves as a coordination point for substrate.

It belongs to the GHMP kinase family. GalK subfamily.

Its subcellular location is the cytoplasm. The catalysed reaction is alpha-D-galactose + ATP = alpha-D-galactose 1-phosphate + ADP + H(+). Its pathway is carbohydrate metabolism; galactose metabolism. Functionally, catalyzes the transfer of the gamma-phosphate of ATP to D-galactose to form alpha-D-galactose-1-phosphate (Gal-1-P). This is Galactokinase from Vibrio parahaemolyticus serotype O3:K6 (strain RIMD 2210633).